A 352-amino-acid polypeptide reads, in one-letter code: Minor capsid protein VP2 (352 aa).

Residue glycine 2 is the site of N-myristoyl glycine; by host attachment. A D1 region spans residues serine 273–serine 308. A helical membrane pass occupies residues threonine 290–leucine 310. A disordered region spans residues tyrosine 313 to serine 352. A DNA-binding region spans residues tyrosine 313 to serine 352. Residues glycine 316 to leucine 324 carry the Nuclear localization signal motif. Over residues arginine 326 to serine 338 the composition is skewed to polar residues. Over residues lysine 340–serine 352 the composition is skewed to basic residues.

This sequence belongs to the polyomaviruses capsid protein VP2 family. In terms of assembly, forms homooligomers, and heterooligomers with VP3 in the endoplasmic reticulum membrane. Interacts (via D1 domain) with VP1. Interacts (via D1 domain) with VP1. Interacts (via C-terminus) with host SP1, this is probably also the case for VP2; this interaction represses SP1 activation of the SV40 early promoter and participates in virion assembly. Interacts (via nuclear localization signal) with host importin alpha2-beta heterodimer. As to quaternary structure, oligomerizes with VP3 in the nucleus.

It localises to the virion. It is found in the host nucleus. Its subcellular location is the host endoplasmic reticulum. The protein resides in the host endoplasmic reticulum membrane. Functionally, structural protein that resides within the core of the capsid surrounded by 72 VP1 pentamers. Following virus endocytosis and trafficking to the endoplasmic reticulum, VP2 and VP3 form oligomers and integrate into the endoplasmic reticulum membrane. Heterooligomer VP2-VP3 may create a viroporin for transporting the viral genome across the endoplasmic reticulum membrane to the cytoplasm. Nuclear entry of the viral DNA involves the selective exposure and importin recognition of VP2 or VP3 nuclear localization signal (shared C-terminus). Plays a role in virion assembly within the nucleus in particular through a DNA-binding domain located in the C-terminal region. An N-terminal myristoylation suggests a scaffold function for virion assembly. The viral progenies exit the cells by lytic release. Isoform VP2 may repress SP1 activation of the SV40 early promoter, via specific protein-protein and protein-DNA interactions. Structural protein that resides within the core of the capsid surrounded by 72 VP1 pentamers. Following virus entry, VP2 and VP3 form oligomers and integrate into the endoplasmic reticulum membrane. Heterooligomer VP2-VP3 may create a viroporin for transporting the viral genome across the endoplasmic reticulum membrane. Essential for focus formation and virus endoplasmic reticulum-to-cytosol membrane transport, required to recruit selective cellular components to the foci in the ER membrane. Nuclear entry of the viral DNA involves the selective exposure and importin recognition of VP2 or VP3 nuclear localization signal (shared C-terminus). Isoform VP3 represses SP1 activation of the SV40 early promoter, via specific protein-protein and protein-DNA interactions. SP1 additionally participates in recruiting VP3 to the SV40 minichromosome during SV40 assembly. Plays a role in virion assembly within the nucleus. May initiate host cell lysis when associated with VP4. In terms of biological role, viroporin inducing perforation of cellular membranes to trigger virus progeny release. Forms pores of 3 nm inner diameter. VP4 is expressed about 24 hours after the late structural proteins and is not incorporated into the mature virion. The polypeptide is Minor capsid protein VP2 (Simian virus 40 (SV40)).